Consider the following 365-residue polypeptide: 5-hydroxytryptamine receptor 1E (365 aa).

Over 1–22 (MNITNCTTDASMVVRPKTVTEK) the chain is Extracellular. 2 N-linked (GlcNAc...) asparagine glycosylation sites follow: N2 and N5. A helical transmembrane segment spans residues 23 to 47 (MLICMTLVIITTLTMLLNSAVIMAI). Topologically, residues 48–59 (CTTKKLHQPANY) are cytoplasmic. Residues 60 to 82 (LICSLAVTDLLVAVLVMPLSIMY) traverse the membrane as a helical segment. At 83-96 (IVMDSWRLGYFICE) the chain is on the extracellular side. C95 and C173 are disulfide-bonded. A helical transmembrane segment spans residues 97–118 (VWLSVDMTCCTCSILHLCVIAL). 2 residues coordinate ergotamine: D102 and T107. The DRY motif; important for ligand-induced conformation changes motif lies at 119–121 (DRY). At 119 to 138 (DRYWAITNAIEYARKRTAKR) the chain is on the cytoplasmic side. The helical transmembrane segment at 139-160 (AGLMILTVWTISIFISMPPLFW) threads the bilayer. Residues 161–179 (RSHRQLSPPPSQCTIQHDH) lie on the Extracellular side of the membrane. I175 lines the ergotamine pocket. The helical transmembrane segment at 180–202 (VIYTIYSTFGAFYIPLTLILILY) threads the bilayer. Residues 203 to 291 (YRIYHAAKSL…SSTRERKAAR (89 aa)) lie on the Cytoplasmic side of the membrane. The helical transmembrane segment at 292–314 (ILGLILGAFILSWLPFFIKELIV) threads the bilayer. Residues 315-324 (GLSIYTVSSE) are Extracellular-facing. The helical transmembrane segment at 325 to 347 (VGDFLTWLGYVNSLINPLLYTSF) threads the bilayer. Positions 340–344 (NPLLY) match the NPxxY motif; important for ligand-induced conformation changes and signaling motif. Residues 348–365 (NEDFKLAFKKLIRCREHT) lie on the Cytoplasmic side of the membrane.

This sequence belongs to the G-protein coupled receptor 1 family. In terms of tissue distribution, detected in the brain with the greatest abundance in the hippocampus, followed by the olfactory bulb. Lower levels are detected in the cortex, thalamus, pons, hypothalamus, midbrain, striatum, and cerebellum.

The protein localises to the cell membrane. In terms of biological role, G-protein coupled receptor for 5-hydroxytryptamine (serotonin). Also functions as a receptor for various alkaloids and psychoactive substances. Ligand binding causes a conformation change that triggers signaling via guanine nucleotide-binding proteins (G proteins) and modulates the activity of down-stream effectors, such as adenylate cyclase. Signaling inhibits adenylate cyclase activity. This Cavia porcellus (Guinea pig) protein is 5-hydroxytryptamine receptor 1E (5HT1E).